Reading from the N-terminus, the 110-residue chain is Nucleoid-associated protein YpAngola_A2890 (110 aa).

The tract at residues Lys90–Phe110 is disordered.

Belongs to the YbaB/EbfC family. Homodimer.

It is found in the cytoplasm. The protein localises to the nucleoid. Its function is as follows. Binds to DNA and alters its conformation. May be involved in regulation of gene expression, nucleoid organization and DNA protection. This Yersinia pestis bv. Antiqua (strain Angola) protein is Nucleoid-associated protein YpAngola_A2890.